A 235-amino-acid polypeptide reads, in one-letter code: Putative HAD-hydrolase YfnB (235 aa).

The active-site Nucleophile is D10.

Belongs to the HAD-like hydrolase superfamily. YjjG family.

In Bacillus subtilis (strain 168), this protein is Putative HAD-hydrolase YfnB (yfnB).